The following is a 126-amino-acid chain: Holo-[acyl-carrier-protein] synthase (126 aa).

2 residues coordinate Mg(2+): Asp-9 and Glu-57.

This sequence belongs to the P-Pant transferase superfamily. AcpS family. Requires Mg(2+) as cofactor.

It is found in the cytoplasm. The enzyme catalyses apo-[ACP] + CoA = holo-[ACP] + adenosine 3',5'-bisphosphate + H(+). Transfers the 4'-phosphopantetheine moiety from coenzyme A to a Ser of acyl-carrier-protein. In Alteromonas mediterranea (strain DSM 17117 / CIP 110805 / LMG 28347 / Deep ecotype), this protein is Holo-[acyl-carrier-protein] synthase.